Reading from the N-terminus, the 66-residue chain is MEQGTVKWFNAEKGFGFIERENGDDVFVHFSAIQSDGFKSLDEGQKVSFDVEQGARGAQAANVQKA.

Residues 4–63 (GTVKWFNAEKGFGFIERENGDDVFVHFSAIQSDGFKSLDEGQKVSFDVEQGARGAQAANV) form the CSD domain.

It is found in the cytoplasm. The chain is Cold shock protein CspC (cspC) from Bacillus subtilis (strain 168).